An 80-amino-acid chain; its full sequence is LSM complex subunit lsm5 (80 aa).

A Sm domain is found at 6 to 79 (LPLELIDKCI…MCMLIPGGKP (74 aa)).

It belongs to the snRNP Sm proteins family. Component of the heptameric LSM1-LSM7 complex that forms a seven-membered ring structure with a donut shape. The LSm subunits are arranged in the order lsm1, lsm2, lsm3, lsm6, lsm5, lsm7 and lsm4. Component of the heptameric LSM2-LSM8 complex that forms a seven-membered ring structure with a donut shape. The LSm subunits are arranged in the order lsm8, lsm2, lsm3, lsm6, lsm5, lsm7 and lsm4.

It localises to the nucleus. Its function is as follows. Component of LSm protein complexes, which are involved in RNA processing and may function in a chaperone-like manner. Component of the cytoplasmic LSM1-LSM7 complex which is involved in mRNA degradation by activating the decapping step. The LSM1-LSM7 complex loads onto the 3'-end of single stranded RNA. Component of the nuclear LSM2-LSM8 complex, which is involved in spliceosome assembly. The LSM2-LSM8 complex plays a role in the biogenesis of the spliceosomal U4/U6-U5 tri-snRNP complex by accelerating prp24-mediated annealing of U4/U6 di-snRNA. The LSM2-LSM8 complex binds U6 snRNA terminating with a cyclic 2',3' phosphate group; RNA with an unmodified 3' hydroxyl or non-cyclic 3' phosphate is bound less tightly. The chain is LSM complex subunit lsm5 (lsm5) from Schizosaccharomyces pombe (strain 972 / ATCC 24843) (Fission yeast).